The primary structure comprises 317 residues: Osteopontin (317 aa).

Positions methionine 1–cysteine 16 are cleaved as a signal peptide. Residues serine 26, serine 27, serine 60, serine 62, and serine 63 each carry the phosphoserine modification. Residues tryptophan 43 to aspartate 297 are disordered. A compositionally biased stretch (polar residues) spans serine 49–serine 63. A Phosphothreonine modification is found at threonine 66. Phosphoserine occurs at positions 76, 78, 81, 106, 109, 112, 115, and 118. The segment covering aspartate 86 to aspartate 110 has biased composition (acidic residues). O-linked (GalNAc...) threonine glycosylation is found at threonine 123, threonine 132, and threonine 137. The Cell attachment site motif lies at arginine 144 to aspartate 146. Threonine 170 and threonine 175 each carry phosphothreonine. A compositionally biased stretch (basic and acidic residues) spans leucine 174–isoleucine 187. Phosphoserine occurs at positions 176, 180, 200, 204, 209, 213, and 219. Residues serine 197–aspartate 216 are compositionally biased toward polar residues. An O-linked (Xyl...) (chondroitin sulfate) serine glycan is attached at serine 219. Threonine 222 bears the Phosphothreonine mark. Basic and acidic residues-rich tracts occupy residues histidine 223 to threonine 240 and serine 248 to alanine 263. Serine 224, serine 228, serine 257, serine 261, serine 266, serine 270, serine 273, serine 278, serine 283, serine 294, serine 306, serine 311, serine 313, and serine 314 each carry phosphoserine. Basic and acidic residues predominate over residues serine 273–aspartate 297. Residue serine 311 is glycosylated (O-linked (Xyl...) (chondroitin sulfate) serine).

Belongs to the osteopontin family. In terms of assembly, interacts (via N-terminus) with integrin ITGA9:ITGB1. Extensively phosphorylated by FAM20C in the extracellular medium at multiple sites within the S-x-E/pS motif. The phosphorylated form inhibits hydroxyapatite crystallization. Dephosphorylation via a mechanism involving ALPL/TNAP promotes hydroxyapatite crystallization. In terms of processing, O-glycosylated. Post-translationally, forms covalent cross-links mediated by transglutaminase TGM2, between a glutamine and the epsilon-amino group of a lysine residue, forming homopolymers and heteropolymers, increasing its collagen binding properties.

It is found in the secreted. Major non-collagenous bone protein that binds tightly to hydroxyapatite. Appears to form an integral part of the mineralized matrix. Probably important to cell-matrix interaction. Functionally, acts as a cytokine involved in enhancing production of interferon-gamma and interleukin-12 and reducing production of interleukin-10 and is essential in the pathway that leads to type I immunity. This chain is Osteopontin (Spp1), found in Rattus norvegicus (Rat).